We begin with the raw amino-acid sequence, 97 residues long: Small cell adhesion glycoprotein (97 aa).

Residues 1 to 36 (MTSFPTTPPPAEELMATTILQATEALSPEAEASTAL) lie on the Extracellular side of the membrane. O-linked (GalNAc...) threonine glycosylation occurs at threonine 2. Serine 3 carries an O-linked (GalNAc...) serine glycan. 5 O-linked (GalNAc...) threonine glycosylation sites follow: threonine 6, threonine 7, threonine 17, threonine 18, and threonine 23. The chain crosses the membrane as a helical; Signal-anchor for type III membrane protein span at residues 37–57 (IAVVITVVFLTLLSVVILIFF). Topologically, residues 58–97 (YLYKNKGSYVTYEPADGEPGAVVLMENDSAKGREKEEYFI) are cytoplasmic.

It belongs to the SMAGP family. In terms of processing, O-glycosylated. The O-glycan is modified with sialic acid residues.

It is found in the cell membrane. It localises to the cytoplasmic vesicle membrane. In terms of biological role, may play a role in epithelial cell-cell contacts. May play a role in tumor invasiveness and metastasis formation. The chain is Small cell adhesion glycoprotein (SMAGP) from Bos taurus (Bovine).